A 247-amino-acid polypeptide reads, in one-letter code: Probable transcriptional regulatory protein EUBELI_00902 (247 aa).

The protein belongs to the TACO1 family.

It is found in the cytoplasm. The chain is Probable transcriptional regulatory protein EUBELI_00902 from Lachnospira eligens (strain ATCC 27750 / DSM 3376 / VPI C15-48 / C15-B4) (Eubacterium eligens).